The primary structure comprises 103 residues: Protein SUP-1 (103 aa).

The first 16 residues, Met1–Ala16, serve as a signal peptide directing secretion. Topologically, residues Ala17–Trp75 are extracellular. Residues Val76–Val96 form a helical membrane-spanning segment. Topologically, residues Arg97–Lys103 are cytoplasmic.

In terms of tissue distribution, expressed in a subset of neurons and in body wall muscles. In the nervous system, expressed specifically in cholinergic motor neurons of the ventral nerve cord, a subset of cholinergic head neurons, anterior sublateral neurons, and body sublateral neurons (at protein level).

The protein localises to the cell membrane. The protein resides in the perikaryon. It is found in the cell projection. It localises to the synapse. Its subcellular location is the cytoplasmic vesicle. The protein localises to the secretory vesicle. The protein resides in the synaptic vesicle. Its function is as follows. May be involved in trafficking or stabilization of the vesicular acetylcholine transporter unc-17. In Caenorhabditis elegans, this protein is Protein SUP-1.